A 99-amino-acid chain; its full sequence is Ubiquitin-related modifier 1 homolog (99 aa).

Gly-99 carries the 1-thioglycine modification. Gly-99 is covalently cross-linked (Glycyl lysine isopeptide (Gly-Lys) (interchain with K-? in acceptor proteins)).

Belongs to the URM1 family. Post-translationally, C-terminal thiocarboxylation occurs in 2 steps, it is first acyl-adenylated (-COAMP) via the hesA/moeB/thiF part of the MOCS3 homolog, then thiocarboxylated (-COSH) via the rhodanese domain of the MOCS3 homolog.

Its subcellular location is the cytoplasm. The protein operates within tRNA modification; 5-methoxycarbonylmethyl-2-thiouridine-tRNA biosynthesis. Acts as a sulfur carrier required for 2-thiolation of mcm(5)S(2)U at tRNA wobble positions of cytosolic tRNA(Lys), tRNA(Glu) and tRNA(Gln). Serves as sulfur donor in tRNA 2-thiolation reaction by being thiocarboxylated (-COSH) at its C-terminus by MOCS3. The sulfur is then transferred to tRNA to form 2-thiolation of mcm(5)S(2)U. Also acts as a ubiquitin-like protein (UBL) that is covalently conjugated via an isopeptide bond to lysine residues of target proteins. The thiocarboxylated form serves as substrate for conjugation and oxidative stress specifically induces the formation of UBL-protein conjugates. This Chlamydomonas reinhardtii (Chlamydomonas smithii) protein is Ubiquitin-related modifier 1 homolog.